Reading from the N-terminus, the 324-residue chain is 3-hydroxyisobutyrate dehydrogenase, mitochondrial (324 aa).

The transit peptide at methionine 1–glutamine 25 directs the protein to the mitochondrion. NAD(+) contacts are provided by residues lysine 29–aspartate 58, leucine 92–proline 93, and threonine 121. The active site involves lysine 196. Lysine 271 is an NAD(+) binding site.

The protein belongs to the HIBADH-related family. 3-hydroxyisobutyrate dehydrogenase subfamily.

The protein resides in the mitochondrion. The enzyme catalyses 3-hydroxy-2-methylpropanoate + NAD(+) = 2-methyl-3-oxopropanoate + NADH + H(+). Its pathway is amino-acid degradation; L-valine degradation. This Drosophila melanogaster (Fruit fly) protein is 3-hydroxyisobutyrate dehydrogenase, mitochondrial.